The chain runs to 1013 residues: Sodium/potassium-transporting ATPase subunit alpha-3 (1013 aa).

Residues 1–24 are disordered; it reads MGDKKDDKDSPKKNKGKERRDLDD. At 1–77 the chain is on the cytoplasmic side; that stretch reads MGDKKDDKDS…NALTPPPTTP (77 aa). Phosphoserine occurs at positions 37 and 56. Residues 72-74 are interaction with phosphoinositide-3 kinase; the sequence is PPP. The chain crosses the membrane as a helical span at residues 78–98; that stretch reads EWVKFCRQLFGGFSILLWIGA. Residues 99 to 121 are Extracellular-facing; it reads ILCFLAYGIQAGTEDDPSGDNLY. The chain crosses the membrane as a helical span at residues 122–142; that stretch reads LGIVLAAVVIITGCFSYYQEA. Topologically, residues 143–278 are cytoplasmic; the sequence is KSSKIMESFK…VGKTPIAIEI (136 aa). Serine 218 and serine 265 each carry phosphoserine. Residues 279 to 298 form a helical membrane-spanning segment; it reads EHFIQLITGVAVFLGVSFFI. The Extracellular segment spans residues 299-310; it reads LSLILGYTWLEA. Residues 311–328 traverse the membrane as a helical segment; it reads VIFLIGIIVANVPEGLLA. Residues 329 to 762 are Cytoplasmic-facing; sequence TVTVCLTLTA…EEGRLIFDNL (434 aa). Aspartate 366 (4-aspartylphosphate intermediate) is an active-site residue. The residue at position 442 (serine 442) is a Phosphoserine. Position 548 is a phosphotyrosine (tyrosine 548). Mg(2+) is bound by residues aspartate 707 and aspartate 711. Residues 763-782 form a helical membrane-spanning segment; sequence KKSIAYTLTSNIPEITPFLL. Topologically, residues 783-792 are extracellular; it reads FIMANIPLPL. Residues 793 to 813 traverse the membrane as a helical segment; sequence GTITILCIDLGTDMVPAISLA. The Cytoplasmic segment spans residues 814–833; it reads YEAAESDIMKRQPRNPRTDK. The helical transmembrane segment at 834 to 856 threads the bilayer; that stretch reads LVNERLISMAYGQIGMIQALGGF. The Extracellular segment spans residues 857-908; the sequence is FSYFVILAENGFLPGNLVGIRLNWDDRTVNDLEDSYGQQWTYEQRKVVEFTC. Residues 909–928 form a helical membrane-spanning segment; it reads HTAFFVSIVVVQWADLIICK. The Cytoplasmic segment spans residues 929-941; sequence TRRNSVFQQGMKN. Serine 933 carries the post-translational modification Phosphoserine; by PKA. Residues 942 to 960 traverse the membrane as a helical segment; sequence KILIFGLFEETALAAFLSY. The Extracellular portion of the chain corresponds to 961 to 975; that stretch reads CPGMDVALRMYPLKP. Residues 976 to 996 traverse the membrane as a helical segment; the sequence is SWWFCAFPYSFLIFVYDEIRK. Residues 997–1013 are Cytoplasmic-facing; sequence LILRRNPGGWVEKETYY.

Belongs to the cation transport ATPase (P-type) (TC 3.A.3) family. Type IIC subfamily. The sodium/potassium-transporting ATPase is composed of a catalytic alpha subunit, an auxiliary non-catalytic beta subunit and an additional regulatory subunit. Interacts with regulatory subunit FXYD1.

It localises to the cell membrane. It catalyses the reaction K(+)(out) + Na(+)(in) + ATP + H2O = K(+)(in) + Na(+)(out) + ADP + phosphate + H(+). This is the catalytic component of the active enzyme, which catalyzes the hydrolysis of ATP coupled with the exchange of sodium and potassium ions across the plasma membrane. This action creates the electrochemical gradient of sodium and potassium ions, providing the energy for active transport of various nutrients. This is Sodium/potassium-transporting ATPase subunit alpha-3 (ATP1A3) from Homo sapiens (Human).